The sequence spans 151 residues: SsrA-binding protein (151 aa).

It belongs to the SmpB family.

Its subcellular location is the cytoplasm. Required for rescue of stalled ribosomes mediated by trans-translation. Binds to transfer-messenger RNA (tmRNA), required for stable association of tmRNA with ribosomes. tmRNA and SmpB together mimic tRNA shape, replacing the anticodon stem-loop with SmpB. tmRNA is encoded by the ssrA gene; the 2 termini fold to resemble tRNA(Ala) and it encodes a 'tag peptide', a short internal open reading frame. During trans-translation Ala-aminoacylated tmRNA acts like a tRNA, entering the A-site of stalled ribosomes, displacing the stalled mRNA. The ribosome then switches to translate the ORF on the tmRNA; the nascent peptide is terminated with the 'tag peptide' encoded by the tmRNA and targeted for degradation. The ribosome is freed to recommence translation, which seems to be the essential function of trans-translation. The sequence is that of SsrA-binding protein from Wolinella succinogenes (strain ATCC 29543 / DSM 1740 / CCUG 13145 / JCM 31913 / LMG 7466 / NCTC 11488 / FDC 602W) (Vibrio succinogenes).